We begin with the raw amino-acid sequence, 645 residues long: Threonine--tRNA ligase (645 aa).

The 63-residue stretch at 1 to 63 (MEQINIQFPD…ETDGSIEIVT (63 aa)) folds into the TGS domain. Positions 242–540 (DHRKIGKELE…LTEETKGAFP (299 aa)) are catalytic. The Zn(2+) site is built by Cys-336, His-387, and His-517.

The protein belongs to the class-II aminoacyl-tRNA synthetase family. As to quaternary structure, homodimer. Requires Zn(2+) as cofactor.

It localises to the cytoplasm. It carries out the reaction tRNA(Thr) + L-threonine + ATP = L-threonyl-tRNA(Thr) + AMP + diphosphate + H(+). In terms of biological role, catalyzes the attachment of threonine to tRNA(Thr) in a two-step reaction: L-threonine is first activated by ATP to form Thr-AMP and then transferred to the acceptor end of tRNA(Thr). Also edits incorrectly charged L-seryl-tRNA(Thr). This chain is Threonine--tRNA ligase, found in Staphylococcus aureus (strain JH1).